The sequence spans 184 residues: ATP synthase subunit b, chloroplastic (184 aa).

A helical membrane pass occupies residues 31–53; the sequence is LINLGIVISLLIYFGKGVLSNLL.

Belongs to the ATPase B chain family. F-type ATPases have 2 components, F(1) - the catalytic core - and F(0) - the membrane proton channel. F(1) has five subunits: alpha(3), beta(3), gamma(1), delta(1), epsilon(1). F(0) has four main subunits: a(1), b(1), b'(1) and c(10-14). The alpha and beta chains form an alternating ring which encloses part of the gamma chain. F(1) is attached to F(0) by a central stalk formed by the gamma and epsilon chains, while a peripheral stalk is formed by the delta, b and b' chains.

The protein resides in the plastid. Its subcellular location is the chloroplast thylakoid membrane. Functionally, f(1)F(0) ATP synthase produces ATP from ADP in the presence of a proton or sodium gradient. F-type ATPases consist of two structural domains, F(1) containing the extramembraneous catalytic core and F(0) containing the membrane proton channel, linked together by a central stalk and a peripheral stalk. During catalysis, ATP synthesis in the catalytic domain of F(1) is coupled via a rotary mechanism of the central stalk subunits to proton translocation. In terms of biological role, component of the F(0) channel, it forms part of the peripheral stalk, linking F(1) to F(0). The chain is ATP synthase subunit b, chloroplastic from Aneura mirabilis (Parasitic liverwort).